We begin with the raw amino-acid sequence, 256 residues long: uncharacterized protein (256 aa).

A signal peptide spans Met1–Gly24. Residue Cys25 is the site of N-palmitoyl cysteine attachment. Cys25 is lipidated: S-diacylglycerol cysteine.

The protein belongs to the staphylococcal tandem lipoprotein family.

It localises to the cell membrane. This is an uncharacterized protein from Staphylococcus aureus.